Here is a 284-residue protein sequence, read N- to C-terminus: Polyamine aminopropyltransferase (284 aa).

Residues 2–237 enclose the PABS domain; it reads ELWYTEQHTE…GHWLFGFASK (236 aa). S-methyl-5'-thioadenosine is bound at residue Gln-31. Spermidine contacts are provided by His-62 and Asp-86. Residues Glu-106 and 137-138 each bind S-methyl-5'-thioadenosine; that span reads DG. The Proton acceptor role is filled by Asp-155. 155–158 contributes to the spermidine binding site; the sequence is DSTD. Pro-162 provides a ligand contact to S-methyl-5'-thioadenosine.

This sequence belongs to the spermidine/spermine synthase family. In terms of assembly, homodimer or homotetramer.

It localises to the cytoplasm. The enzyme catalyses S-adenosyl 3-(methylsulfanyl)propylamine + putrescine = S-methyl-5'-thioadenosine + spermidine + H(+). It participates in amine and polyamine biosynthesis; spermidine biosynthesis; spermidine from putrescine: step 1/1. In terms of biological role, catalyzes the irreversible transfer of a propylamine group from the amino donor S-adenosylmethioninamine (decarboxy-AdoMet) to putrescine (1,4-diaminobutane) to yield spermidine. The polypeptide is Polyamine aminopropyltransferase (Clostridium beijerinckii (strain ATCC 51743 / NCIMB 8052) (Clostridium acetobutylicum)).